The chain runs to 337 residues: Inositol 2-dehydrogenase (337 aa).

Belongs to the Gfo/Idh/MocA family. As to quaternary structure, homotetramer.

The enzyme catalyses myo-inositol + NAD(+) = scyllo-inosose + NADH + H(+). Functionally, involved in the oxidation of myo-inositol (MI) to 2-keto-myo-inositol (2KMI or 2-inosose). This chain is Inositol 2-dehydrogenase, found in Ralstonia nicotianae (strain ATCC BAA-1114 / GMI1000) (Ralstonia solanacearum).